We begin with the raw amino-acid sequence, 403 residues long: MTSYSYRQSSAMSSYGGMGGGPVRFGSGGVFRAPSIHGGSGGRGVSVSSTRIVSSSSGGYVGGRGGSFSGALTVTDGLLGGNEKITMQNLNDRLASYLDKVRALEQANGELEVKIRDWYQKQGPGPFRDYSQYFKTIEDLRDKILGATIENSKIVLQIDNARLAADDFRTKFETEQALRMSVEADINGLRRVLDELTLARTDLEMQIENLKEELAYLKKNHEEEISALRSQVGGQVSVEVDSTPGIDLAKILSEMRSQYEAMAEKNRKDAEAWYLTQIDELNTQVAVHTTQIQINKTEVTELRRKVQDLEIELQSQLSMKAALEGTVAEIEARYGAQLSHIQGVISSIEVQLSNVRADTERQNQEYQQLMDIKSRLEQEIATYRSLLEGQEAHYNSLSIAKAL.

The tract at residues 1 to 82 (MTSYSYRQSS…TVTDGLLGGN (82 aa)) is head. At Arg-7 the chain carries Omega-N-methylarginine. Ser-14 is modified (phosphoserine). An Asymmetric dimethylarginine; alternate modification is found at Arg-24. Arg-24 is subject to Omega-N-methylarginine; alternate. Ser-27 carries the phosphoserine modification. Arg-32 is subject to Omega-N-methylarginine. Residues Ser-35 and Ser-40 each carry the phosphoserine modification. Residues Arg-43 and Arg-51 each carry the omega-N-methylarginine modification. A phosphoserine mark is found at Ser-57 and Ser-67. Positions 83–118 (EKITMQNLNDRLASYLDKVRALEQANGELEVKIRDW) are coil 1A. Residues 83 to 394 (EKITMQNLND…SLLEGQEAHY (312 aa)) form the IF rod domain. Residues 119 to 136 (YQKQGPGPFRDYSQYFKT) form a linker 1 region. The coil 1B stretch occupies residues 137–228 (IEDLRDKILG…KNHEEEISAL (92 aa)). Residues 229–251 (RSQVGGQVSVEVDSTPGIDLAKI) form a linker 12 region. The interval 247 to 393 (DLAKILSEMR…RSLLEGQEAH (147 aa)) is necessary for interaction with PNN. Residues 252-390 (LSEMRSQYEA…ATYRSLLEGQ (139 aa)) form a coil 2 region. Thr-326 bears the Phosphothreonine mark. Residues 391–403 (EAHYNSLSIAKAL) are rod-like helical tail. Tyr-394 carries the post-translational modification Phosphotyrosine. Phosphoserine is present on Ser-398.

Belongs to the intermediate filament family. In terms of assembly, heterotetramer of two type I and two type II keratins. Interacts with PNN. Interacts with the actin-binding domain of DMD. In terms of tissue distribution, expressed in brain, heart, skin and in costameres of myoplasm at the sarcolemmal membrane in skeletal and cardiac muscle fibers. Undifferentiated gonads and somatic cells of ovarian cords throughout the fetal ovary development.

Functionally, involved in the organization of myofibers. Together with KRT8, helps to link the contractile apparatus to dystrophin at the costameres of striated muscle. The polypeptide is Keratin, type I cytoskeletal 19 (Krt19) (Rattus norvegicus (Rat)).